Reading from the N-terminus, the 369-residue chain is Probable dual-specificity RNA methyltransferase RlmN (369 aa).

Glutamate 108 acts as the Proton acceptor in catalysis. A Radical SAM core domain is found at 114–351 (YPDRATLCIS…LAQGVSCTVR (238 aa)). Cysteine 121 and cysteine 362 form a disulfide bridge. [4Fe-4S] cluster-binding residues include cysteine 128, cysteine 132, and cysteine 135. Residues 183-184 (GE), serine 217, 240-242 (SLH), and asparagine 319 contribute to the S-adenosyl-L-methionine site. Catalysis depends on cysteine 362, which acts as the S-methylcysteine intermediate.

The protein belongs to the radical SAM superfamily. RlmN family. It depends on [4Fe-4S] cluster as a cofactor.

The protein resides in the cytoplasm. The enzyme catalyses adenosine(2503) in 23S rRNA + 2 reduced [2Fe-2S]-[ferredoxin] + 2 S-adenosyl-L-methionine = 2-methyladenosine(2503) in 23S rRNA + 5'-deoxyadenosine + L-methionine + 2 oxidized [2Fe-2S]-[ferredoxin] + S-adenosyl-L-homocysteine. It carries out the reaction adenosine(37) in tRNA + 2 reduced [2Fe-2S]-[ferredoxin] + 2 S-adenosyl-L-methionine = 2-methyladenosine(37) in tRNA + 5'-deoxyadenosine + L-methionine + 2 oxidized [2Fe-2S]-[ferredoxin] + S-adenosyl-L-homocysteine. Functionally, specifically methylates position 2 of adenine 2503 in 23S rRNA and position 2 of adenine 37 in tRNAs. The polypeptide is Probable dual-specificity RNA methyltransferase RlmN (Rhodococcus jostii (strain RHA1)).